A 278-amino-acid polypeptide reads, in one-letter code: Aliphatic sulfonates import ATP-binding protein SsuB (278 aa).

The 222-residue stretch at 15 to 236 (LVLRDLSKRF…SQGDAAFAAL (222 aa)) folds into the ABC transporter domain. 47–54 (GRSGCGKS) serves as a coordination point for ATP. Over residues 251–264 (PERESFTHPNDGEP) the composition is skewed to basic and acidic residues. Residues 251 to 278 (PERESFTHPNDGEPRWPGVPAHGVRWAV) are disordered.

It belongs to the ABC transporter superfamily. Aliphatic sulfonates importer (TC 3.A.1.17.2) family. The complex is composed of two ATP-binding proteins (SsuB), two transmembrane proteins (SsuC) and a solute-binding protein (SsuA).

The protein resides in the cell inner membrane. It catalyses the reaction ATP + H2O + aliphatic sulfonate-[sulfonate-binding protein]Side 1 = ADP + phosphate + aliphatic sulfonateSide 2 + [sulfonate-binding protein]Side 1.. Functionally, part of the ABC transporter complex SsuABC involved in aliphatic sulfonates import. Responsible for energy coupling to the transport system. The chain is Aliphatic sulfonates import ATP-binding protein SsuB from Albidiferax ferrireducens (strain ATCC BAA-621 / DSM 15236 / T118) (Rhodoferax ferrireducens).